The primary structure comprises 35 residues: Anti-H(O) lectin 3 (35 aa).

The protein belongs to the leguminous lectin family. As to quaternary structure, homodimer. In terms of processing, highly glycosylated.

Functionally, binds lactose or galactose. The chain is Anti-H(O) lectin 3 from Ulex europaeus (Furze).